A 521-amino-acid chain; its full sequence is Probable cytosol aminopeptidase (521 aa).

Mn(2+)-binding residues include Lys-268 and Asp-273. The active site involves Lys-280. Residues Asp-291, Asp-350, and Glu-352 each coordinate Mn(2+). Residue Arg-354 is part of the active site.

This sequence belongs to the peptidase M17 family. It depends on Mn(2+) as a cofactor.

Its subcellular location is the cytoplasm. The enzyme catalyses Release of an N-terminal amino acid, Xaa-|-Yaa-, in which Xaa is preferably Leu, but may be other amino acids including Pro although not Arg or Lys, and Yaa may be Pro. Amino acid amides and methyl esters are also readily hydrolyzed, but rates on arylamides are exceedingly low.. It carries out the reaction Release of an N-terminal amino acid, preferentially leucine, but not glutamic or aspartic acids.. Functionally, presumably involved in the processing and regular turnover of intracellular proteins. Catalyzes the removal of unsubstituted N-terminal amino acids from various peptides. The chain is Probable cytosol aminopeptidase from Chromobacterium violaceum (strain ATCC 12472 / DSM 30191 / JCM 1249 / CCUG 213 / NBRC 12614 / NCIMB 9131 / NCTC 9757 / MK).